A 324-amino-acid polypeptide reads, in one-letter code: MGMEGLLQNSTNFVLTGLITHPAFPGLLFAIVFSIFVVAITANLVMILLIHMDSRLHTPMYFLLSQLSIMDTIYICITVPKMLQDLLSKDKTISFLGCAVQIFLYLTLIGGEFFLLGLMAYDRYVAVCNPLRYPLLMNRRVCLFMVVGSWVGGSLDGFMLTPVTMSFPFCRSREINHFFCEIPAVLKLSCTDTSLYETLMYACCVLMLLIPLSVISVSYTHILLTVHRMNSAEGRRKAFATCSSHIMVVSVFYGAAFYTNVLPHSYHTPEKDKVVSAFYTILTPMLNPLIYSLRNKDVAAALRKVLGRCGSSQSIRVATVIRKG.

At 1–26 (MGMEGLLQNSTNFVLTGLITHPAFPG) the chain is on the extracellular side. Residue Asn-9 is glycosylated (N-linked (GlcNAc...) asparagine). The helical transmembrane segment at 27-50 (LLFAIVFSIFVVAITANLVMILLI) threads the bilayer. The Cytoplasmic portion of the chain corresponds to 51–58 (HMDSRLHT). Residues 59 to 80 (PMYFLLSQLSIMDTIYICITVP) traverse the membrane as a helical segment. At 81 to 101 (KMLQDLLSKDKTISFLGCAVQ) the chain is on the extracellular side. A disulfide bridge links Cys-98 with Cys-190. Residues 102-121 (IFLYLTLIGGEFFLLGLMAY) traverse the membrane as a helical segment. Residues 122–140 (DRYVAVCNPLRYPLLMNRR) are Cytoplasmic-facing. Residues 141–159 (VCLFMVVGSWVGGSLDGFM) traverse the membrane as a helical segment. The Extracellular segment spans residues 160 to 196 (LTPVTMSFPFCRSREINHFFCEIPAVLKLSCTDTSLY). The chain crosses the membrane as a helical span at residues 197-220 (ETLMYACCVLMLLIPLSVISVSYT). Topologically, residues 221-237 (HILLTVHRMNSAEGRRK) are cytoplasmic. A helical transmembrane segment spans residues 238-260 (AFATCSSHIMVVSVFYGAAFYTN). Topologically, residues 261–273 (VLPHSYHTPEKDK) are extracellular. A helical membrane pass occupies residues 274–293 (VVSAFYTILTPMLNPLIYSL). The Cytoplasmic segment spans residues 294 to 324 (RNKDVAAALRKVLGRCGSSQSIRVATVIRKG).

It belongs to the G-protein coupled receptor 1 family.

Its subcellular location is the cell membrane. Odorant receptor. The protein is Olfactory receptor 2T2 (OR2T2) of Homo sapiens (Human).